Consider the following 4246-residue polypeptide: Intermembrane lipid transfer protein vps13F (4246 aa).

A Chorein N-terminal domain is found at 2–113; the sequence is FESIVSNLLT…LLLQKKLKKL (112 aa). Disordered regions lie at residues 141–271, 401–420, 591–759, 914–944, 964–1014, 1217–1251, 1356–1379, 1395–1436, 1622–1683, 2101–2131, 2211–2237, 2471–2513, 2704–2756, 3421–3449, 3611–3652, and 3794–3813; these read IKEK…EDED, PKKS…PPPK, KAED…SILG, VSSS…EKKL, KKSK…TNDE, QAQQ…IKSP, ISTH…DRVD, YNGV…KSKK, REKR…KSQS, LESL…QQQQ, HHSK…EKEK, QQQH…KSKQ, LSTS…QTTK, IDDD…TSPL, KTLN…NNQN, and NNNN…NIDE. Residues 168 to 201 are compositionally biased toward low complexity; sequence NASPVNSNNNNNNNSNLVSESNIPSSSSSSSSSL. Positions 207–217 are enriched in basic and acidic residues; it reads NSSKDANKSDD. Residues 218-271 are compositionally biased toward acidic residues; it reads TDMDVDDDDEFQEATEGDYDNEEEQDDHDEEDDLSDDDDDDDDEEDDYEMEDED. Composition is skewed to low complexity over residues 401-413 and 597-658; these read PKKS…TTTP and QQQQ…SNST. The segment covering 659-668 has biased composition (basic and acidic residues); sequence DSKDIMKSSG. The segment covering 669-680 has biased composition (low complexity); sequence DKNVNNNNNMGD. Residues 681 to 702 are compositionally biased toward basic and acidic residues; it reads NENKDNIDKKEENKNDDQDNKN. 2 stretches are compositionally biased toward low complexity: residues 725-747 and 914-924; these read SGGW…QQQQ and VSSSPSPVSSP. 2 stretches are compositionally biased toward basic and acidic residues: residues 925 to 944 and 987 to 1001; these read SRDK…EKKL and DKYS…REES. The span at 1217–1241 shows a compositional bias: low complexity; sequence QAQQQAQQQQQSQHPSSNDDNSSSN. Over residues 1400–1409 the composition is skewed to acidic residues; that stretch reads SDDDNNDDEN. 2 stretches are compositionally biased toward basic and acidic residues: residues 1410-1431 and 1622-1634; these read DKTT…DSLK and REKR…DKDN. The segment covering 1644-1670 has biased composition (low complexity); sequence QQSIPQKQQQQQQQQQQQQQQQQQQQQ. Composition is skewed to low complexity over residues 2471–2506, 2705–2755, 3430–3449, 3613–3652, and 3794–3809; these read QQQH…NNNN, STST…TQTT, DSGS…TSPL, LNNN…NNQN, and NNNN…NDFN.

This sequence belongs to the VPS13 family.

It localises to the membrane. In terms of biological role, mediates the transfer of lipids between membranes at organelle contact sites. The protein is Intermembrane lipid transfer protein vps13F (vps13F) of Dictyostelium discoideum (Social amoeba).